Consider the following 161-residue polypeptide: DNA-binding protein inhibitor ID-4 (161 aa).

A bHLH domain is found at 52–104; sequence AAEAAADEPALCLQCDMNDCYSRLRRLVPTIPPNKKVSKVEILQHVIDYILDL. Residues 117-126 show a composition bias toward pro residues; sequence QPPPPAPPHH. The disordered stretch occupies residues 117 to 161; that stretch reads QPPPPAPPHHPAGTCPAAPPRTPLTALNTDPAGAVNKQGDSILCR.

In terms of assembly, heterodimer with other HLH proteins.

It is found in the nucleus. Transcriptional regulator (lacking a basic DNA binding domain) which negatively regulates the basic helix-loop-helix (bHLH) transcription factors by forming heterodimers and inhibiting their DNA binding and transcriptional activity. Implicated in regulating a variety of cellular processes, including cellular growth, senescence, differentiation, apoptosis, angiogenesis, and neoplastic transformation. The polypeptide is DNA-binding protein inhibitor ID-4 (ID4) (Homo sapiens (Human)).